A 65-amino-acid polypeptide reads, in one-letter code: Antimicrobial peptide THP1 (65 aa).

A signal peptide spans 1–25 (MRIVYLLFPFILLLAQGAAGSSLAL). 3 disulfides stabilise this stretch: Cys31-Cys53, Cys38-Cys59, and Cys43-Cys60. A propeptide spanning residues 61 to 65 (KTLLG) is cleaved from the precursor.

Belongs to the beta-defensin family.

The protein resides in the secreted. Functionally, bactericidal activity; inhibits S.aureus and E.coli. This Meleagris gallopavo (Wild turkey) protein is Antimicrobial peptide THP1.